We begin with the raw amino-acid sequence, 465 residues long: Dihydrolipoyllysine-residue acetyltransferase component 5 of pyruvate dehydrogenase complex, chloroplastic (465 aa).

The transit peptide at 1–31 (MSRLLQTPFLPSVSLPTKTRSSVTGFRVKPR) directs the protein to the chloroplast. The Lipoyl-binding domain maps to 39 to 114 (IREIFMPALS…PVGSAIALLA (76 aa)). An N6-lipoyllysine modification is found at lysine 80. The disordered stretch occupies residues 123–148 (AKAKASGGGGGGDSKAPPASPPTAAV). The span at 136-148 (SKAPPASPPTAAV) shows a compositional bias: low complexity. The Peripheral subunit-binding (PSBD) domain maps to 184–221 (VASPYAKKLAKELKVELAGLVGSGPMGRIVAKDVEAVA). The active site involves histidine 438.

The protein belongs to the 2-oxoacid dehydrogenase family. The cofactor is (R)-lipoate.

Its subcellular location is the plastid. It localises to the chloroplast stroma. The catalysed reaction is N(6)-[(R)-dihydrolipoyl]-L-lysyl-[protein] + acetyl-CoA = N(6)-[(R)-S(8)-acetyldihydrolipoyl]-L-lysyl-[protein] + CoA. In terms of biological role, the pyruvate dehydrogenase complex catalyzes the overall conversion of pyruvate to acetyl-CoA and CO(2). It contains multiple copies of three enzymatic components: pyruvate dehydrogenase (E1), dihydrolipoamide acetyltransferase (E2) and lipoamide dehydrogenase (E3). The chain is Dihydrolipoyllysine-residue acetyltransferase component 5 of pyruvate dehydrogenase complex, chloroplastic (EMB3003) from Arabidopsis thaliana (Mouse-ear cress).